The sequence spans 156 residues: Small ribosomal subunit protein uS7 (156 aa).

It belongs to the universal ribosomal protein uS7 family. In terms of assembly, part of the 30S ribosomal subunit. Contacts proteins S9 and S11.

Functionally, one of the primary rRNA binding proteins, it binds directly to 16S rRNA where it nucleates assembly of the head domain of the 30S subunit. Is located at the subunit interface close to the decoding center, probably blocks exit of the E-site tRNA. The polypeptide is Small ribosomal subunit protein uS7 (Clostridium botulinum (strain Alaska E43 / Type E3)).